The sequence spans 576 residues: D-lactate dehydrogenase [cytochrome], mitochondrial (576 aa).

The 182-residue stretch at 139–320 folds into the FAD-binding PCMH-type domain; sequence EANQRPEIVL…TEATIKCHVR (182 aa).

The protein belongs to the FAD-binding oxidoreductase/transferase type 4 family. FAD is required as a cofactor. It depends on Zn(2+) as a cofactor.

It is found in the mitochondrion matrix. The enzyme catalyses (R)-lactate + 2 Fe(III)-[cytochrome c] = 2 Fe(II)-[cytochrome c] + pyruvate + 2 H(+). Functionally, catalyzes the stereospecific oxidation of D-lactate to pyruvate. This Kluyveromyces lactis (strain ATCC 8585 / CBS 2359 / DSM 70799 / NBRC 1267 / NRRL Y-1140 / WM37) (Yeast) protein is D-lactate dehydrogenase [cytochrome], mitochondrial (DLD1).